The primary structure comprises 714 residues: Transcription activator of gluconeogenesis UREG_00958 (714 aa).

A disordered region spans residues 1 to 71; the sequence is MTSNARNGPL…NAKDPLRPRR (71 aa). Polar residues predominate over residues 38 to 62; it reads ESQTQVENSSTKQPNGQTKPMSASN. The segment at residues 78-106 is a DNA-binding region (zn(2)-C6 fungal-type); that stretch reads CFACQRAHLTCGDERPCQRCIKRGIQNSC. 3 disordered regions span residues 176–228, 274–312, and 539–567; these read SLSQ…NASG, GAGD…TAQP, and NTGG…VNPS. Residues 191–228 show a composition bias toward polar residues; it reads FPSQSPVSPTFSITANSATSGNQNMPSSLPASNGNASG. Over residues 545 to 555 the composition is skewed to low complexity; it reads GSTSGTSSRGS.

Belongs to the ERT1/acuK family.

The protein localises to the nucleus. In terms of biological role, transcription factor which regulates nonfermentable carbon utilization. Activator of gluconeogenetic genes. The polypeptide is Transcription activator of gluconeogenesis UREG_00958 (Uncinocarpus reesii (strain UAMH 1704)).